The following is a 67-amino-acid chain: Large ribosomal subunit protein uL29 (67 aa).

It belongs to the universal ribosomal protein uL29 family.

The protein is Large ribosomal subunit protein uL29 of Desulforudis audaxviator (strain MP104C).